The chain runs to 70 residues: Large ribosomal subunit protein uL29 (70 aa).

This sequence belongs to the universal ribosomal protein uL29 family.

This is Large ribosomal subunit protein uL29 from Thermosynechococcus vestitus (strain NIES-2133 / IAM M-273 / BP-1).